Here is a 200-residue protein sequence, read N- to C-terminus: Ribonuclease HII (200 aa).

The region spanning 11–200 (QSIAGVDEVG…VRRALISLTG (190 aa)) is the RNase H type-2 domain. A divalent metal cation is bound by residues Asp-17, Glu-18, and Asp-109.

The protein belongs to the RNase HII family. It depends on Mn(2+) as a cofactor. Mg(2+) is required as a cofactor.

The protein resides in the cytoplasm. The catalysed reaction is Endonucleolytic cleavage to 5'-phosphomonoester.. Functionally, endonuclease that specifically degrades the RNA of RNA-DNA hybrids. This is Ribonuclease HII from Hamiltonella defensa subsp. Acyrthosiphon pisum (strain 5AT).